Reading from the N-terminus, the 123-residue chain is Large ribosomal subunit protein uL29 (123 aa).

It belongs to the universal ribosomal protein uL29 family.

In Euphorbia esula (Leafy spurge), this protein is Large ribosomal subunit protein uL29 (RPL35).